The primary structure comprises 378 residues: Mannitol-1-phosphate 5-dehydrogenase (378 aa).

4 to 15 (SVHFGAGNIGRG) contacts NAD(+).

This sequence belongs to the mannitol dehydrogenase family.

It catalyses the reaction D-mannitol 1-phosphate + NAD(+) = beta-D-fructose 6-phosphate + NADH + H(+). The polypeptide is Mannitol-1-phosphate 5-dehydrogenase (Streptococcus pneumoniae (strain 70585)).